A 1360-amino-acid polypeptide reads, in one-letter code: Lysine-specific demethylase REF6 (1360 aa).

Ala-2 carries the post-translational modification N-acetylalanine. In terms of domain architecture, JmjN spans 20–61 (APEFRPTLAEFQDPIAYILKIEEEASRYGICKILPPLPPPSK). In terms of domain architecture, JmjC spans 203–369 (ETAWNMRAMS…MAKDAAIRRA (167 aa)). Fe cation-binding residues include His-246, Glu-248, and His-337. The segment at 652-698 (YGDSSDSEEEDQKGLVTPSSKGETKTYDQEGSDGHEEARDGRTSDFN) is disordered. Basic and acidic residues predominate over residues 673–694 (GETKTYDQEGSDGHEEARDGRT). Residues 944 to 951 (CRKRKIRA) carry the Nuclear localization signal motif. Disordered regions lie at residues 955 to 1012 (PRKK…DPHK), 1044 to 1081 (AASESSMENGSQHSMYDHDDDDDDIDRQPRGIPRSQQT), 1133 to 1155 (TGKRQTRSTAKRIAKTKTVQSSR), and 1172 to 1238 (EELD…NEEE). 2 stretches are compositionally biased toward polar residues: residues 994 to 1008 (ETGNTASGDSSNQMS) and 1046 to 1057 (SESSMENGSQHS). The segment covering 1136 to 1147 (RQTRSTAKRIAK) has biased composition (basic residues). Residues 1225-1238 (EKEEEEEEEENEEE) show a composition bias toward acidic residues. The segment at 1243–1266 (YQCNMEGCTMSFSSEKQLMLHKRN) adopts a C2H2-type 1; degenerate zinc-finger fold. Residues Cys-1245, Cys-1250, His-1263, Cys-1268, Cys-1273, His-1280, His-1286, His-1290, Cys-1298, Cys-1303, His-1316, His-1320, Cys-1328, Cys-1333, His-1346, and His-1352 each coordinate Zn(2+). 3 consecutive C2H2-type zinc fingers follow at residues 1266–1290 (NICPIKGCGKNFFSHKYLVQHQRVH), 1296–1320 (LKCPWKGCKMTFKWAWSRTEHIRVH), and 1326–1352 (YVCAEPDCGQTFRFVSDFSRHKRKTGH). The tract at residues 1275-1348 (KNFFSHKYLV…FVSDFSRHKR (74 aa)) is DNA-binding.

The protein belongs to the JHDM3 histone demethylase family. Forms homooligomers. Interacts with BZR2 (via N-terminus). Interacts with BRM in the SWI/SNF complex. Interacts (via N-terminus) with NFYC9. Associates with INO80. In terms of tissue distribution, highly expressed in the shoot apical meristem and primary and secondary root tips, and lower expression in cotyledons, leaves and root axis along vascular tissues. Detected in inflorescences, stems and siliques. Present in seeds.

Its subcellular location is the nucleus. It catalyses the reaction N(6),N(6),N(6)-trimethyl-L-lysyl(27)-[histone H3] + 2-oxoglutarate + O2 = N(6),N(6)-dimethyl-L-lysyl(27)-[histone H3] + formaldehyde + succinate + CO2. The catalysed reaction is N(6),N(6)-dimethyl-L-lysyl(27)-[histone H3] + 2-oxoglutarate + O2 = N(6)-methyl-L-lysyl(27)-[histone H3] + formaldehyde + succinate + CO2. Histone demethylase that demethylates 'Lys-27' (H3K27me) of histone H3, thus acting as a positive regulator of gene expression. Demethylates both tri- (H3K27me3) and di-methylated (H3K27me2) H3K27me. Also demethylates H3K4me3/2 and H3K36me3/2 in an in vitro assay. Involved in the transcriptional regulation of hundreds of genes regulating developmental patterning and responses to various stimuli. Binds DNA via its four zinc fingers in a sequence-specific manner, 5'-CTCTG(C/T)T(C/T)-3' (5'-CTCTGYTY-3'), with a preference for hypo-methylated status (e.g. cytosine methylation), to promote the demethylation of H3K27me3 and recruit the chromatin remodeler BRM in order to activate gene expression. Participates in the regulation of organ boundary formation. Bind mostly motifs located in active chromatin states which are depleted for heterochromatic modifications. Involved in the regulation of flowering time by repressing FLOWERING LOCUS C (FLC) expression. Stimulates lateral roots formation (e.g. primordium initiation and emergence) via the epigenetic de-repression of PIN genes such as PIN1, PIN3 and PIN7 directly by modulating the methylation status of their loci. Interacts with the NF-Y complex to regulate SOC1. Mediates the recruitment of BRM to its target loci. Together with EEN, involved in the epigenetic chromatin-dependent regulatory mechanism that monitors the expression of the essential multifunctional plant stress regulator EIN2 via H3K27me3 repressive histone demethylation and histone variant H2A.Z eviction, thus modulating responses to ethylene (ET), especially during embryogenesis. Eluviates seed dormancy by triggering abscisic acid (ABA) catabolism in seeds via the induction of CYP707A1 and CYP707A3 expression, genes involved in ABA degradation; binds directly to CYP707A1 and CYP707A3 loci to reduce their H3K27me3 levels in developing siliques. Required for systemic acquired resistance (SAR) toward pathogenic bacteria (e.g. Pseudomonas syringae pv tomato DC3000 (avrPto)). Together with FLD and MSI4/FVE, contributes to dehydroabietinal-dependent (DA, a diterpenoid tricyclic diterpene) activation of flowering ans SAR. Binds to the HSFA2 chromatin region to alleviate H3K27me3 repressive marks and trigger its expression in response to heat in a BRM-dependent manner. Involved in the mechanisms necessary for quick response to heat and subsequent heritable transgenerational memory of heat acclimation (global warming) such as early flowering and attenuated immunity; this process includes epigenetic regulation as well as post-transcriptional gene silencing (PTGS). In response to heat, HSFA2 is activated and promotes the expression of REF6 which in turn derepresses HSFA2, thus establishing a heritable feedback loop able to trigger SGIP1 and subsequent SGIP1-mediated SGS3 degradation; this prevents the biosynthesis of trans-acting siRNA (tasiRNA) and leads to the release of HTT5, which drives early flowering but attenuates immunity. Its function is as follows. Involved in the maintenance of H3K27me1 histone marks on euchromatin in a PRC2-dependent manner, to maintain low-level basal expression of corresponding genes. Together with ELF6, required for H3K27me3 resetting (especially in constitutive heterochromatin within the pericentromeric regions) and transgenerational inheritance of histone marks, thus acting in safeguarding genome and epigenome integrity during sexual reproduction. The chain is Lysine-specific demethylase REF6 from Arabidopsis thaliana (Mouse-ear cress).